The sequence spans 328 residues: Malate dehydrogenase (328 aa).

11–17 serves as a coordination point for NAD(+); sequence GAAGQIG. 2 residues coordinate substrate: arginine 94 and arginine 100. Residues asparagine 107, glutamine 114, and 131–133 each bind NAD(+); that span reads VGN. Substrate is bound by residues asparagine 133 and arginine 164. Catalysis depends on histidine 189, which acts as the Proton acceptor.

The protein belongs to the LDH/MDH superfamily. MDH type 2 family.

It carries out the reaction (S)-malate + NAD(+) = oxaloacetate + NADH + H(+). In terms of biological role, catalyzes the reversible oxidation of malate to oxaloacetate. This chain is Malate dehydrogenase, found in Xanthomonas campestris pv. campestris (strain B100).